Here is a 335-residue protein sequence, read N- to C-terminus: Methionine import ATP-binding protein MetN 1 (335 aa).

The ABC transporter domain maps to 2-242 (IEFQQVHKTY…PQHPTTKRFV (241 aa)). Position 38-45 (38-45 (GHSGAGKS)) interacts with ATP.

Belongs to the ABC transporter superfamily. Methionine importer (TC 3.A.1.24) family. In terms of assembly, the complex is composed of two ATP-binding proteins (MetN), two transmembrane proteins (MetI) and a solute-binding protein (MetQ).

Its subcellular location is the cell inner membrane. The enzyme catalyses L-methionine(out) + ATP + H2O = L-methionine(in) + ADP + phosphate + H(+). It catalyses the reaction D-methionine(out) + ATP + H2O = D-methionine(in) + ADP + phosphate + H(+). In terms of biological role, part of the ABC transporter complex MetNIQ involved in methionine import. Responsible for energy coupling to the transport system. The protein is Methionine import ATP-binding protein MetN 1 of Pseudomonas putida (strain ATCC 47054 / DSM 6125 / CFBP 8728 / NCIMB 11950 / KT2440).